The primary structure comprises 1396 residues: DNA-directed RNA polymerase subunit beta' (1396 aa).

Residues C72, C74, C87, and C90 each coordinate Zn(2+). D463, D465, and D467 together coordinate Mg(2+). Zn(2+) is bound by residues C814, C889, C896, and C899.

This sequence belongs to the RNA polymerase beta' chain family. In terms of assembly, the RNAP catalytic core consists of 2 alpha, 1 beta, 1 beta' and 1 omega subunit. When a sigma factor is associated with the core the holoenzyme is formed, which can initiate transcription. Mg(2+) serves as cofactor. Requires Zn(2+) as cofactor.

The enzyme catalyses RNA(n) + a ribonucleoside 5'-triphosphate = RNA(n+1) + diphosphate. In terms of biological role, DNA-dependent RNA polymerase catalyzes the transcription of DNA into RNA using the four ribonucleoside triphosphates as substrates. This is DNA-directed RNA polymerase subunit beta' from Chlamydia trachomatis serovar L2 (strain ATCC VR-902B / DSM 19102 / 434/Bu).